Consider the following 255-residue polypeptide: Cyclase-like protein 1 (255 aa).

The first 24 residues, 1–24 (MTRSVSFPLFLFAVVLSLSSSLLA), serve as a signal peptide directing secretion.

The protein belongs to the Cyclase 1 superfamily.

The protein localises to the secreted. It is found in the extracellular space. It localises to the extracellular matrix. Acts as a negative regulator of fumonisin B1- and pathogen-induced programmed cell death (PCD), and regulates pathogen-induced symptom development. May function redundantly with CYCLASE2 for normal plant growth, development and viability. This is Cyclase-like protein 1 from Arabidopsis thaliana (Mouse-ear cress).